A 1185-amino-acid chain; its full sequence is 1-phosphatidylinositol 4,5-bisphosphate phosphodiesterase beta-2 (1185 aa).

In terms of domain architecture, PI-PLC X-box spans 312–463 (HDMTQPLNHY…LRGKILIKNK (152 aa)). Histidine 327 is a catalytic residue. 3 residues coordinate Ca(2+): asparagine 328, glutamate 357, and aspartate 359. Histidine 374 is an active-site residue. Glutamate 408 contacts Ca(2+). The tract at residues 460-533 (IKNKKNQFSG…EEIKKMQSDE (74 aa)) is disordered. The span at 465-476 (NQFSGPTSSSKD) shows a compositional bias: polar residues. Positions 501–524 (EGTELEEEEVEEEEEEESGNLDEE) are enriched in acidic residues. The PI-PLC Y-box domain occupies 546–662 (MSSLVNYIQP…GYLLKHEFMR (117 aa)). In terms of domain architecture, C2 spans 662-790 (RRPDKQFNPF…CLHSESNMPL (129 aa)). Disordered stretches follow at residues 859–888 (LAPTSNGSPAARAGAREEAMKEAAEPRTAS) and 943–979 (GACKLGPGKGSRKKRSLPREESAGAAPGEGPEGVDGR). Residues 872 to 888 (GAREEAMKEAAEPRTAS) are compositionally biased toward basic and acidic residues. At serine 953 the chain carries Phosphoserine. The stretch at 988 to 1147 (ELELLRQGEE…VKESVRACLR (160 aa)) forms a coiled coil.

Interacts with RAC1. Forms a complex composed of at least WDR26, a G-beta:gamma unit, and PLCB2. It depends on Ca(2+) as a cofactor.

The enzyme catalyses a 1,2-diacyl-sn-glycero-3-phospho-(1D-myo-inositol-4,5-bisphosphate) + H2O = 1D-myo-inositol 1,4,5-trisphosphate + a 1,2-diacyl-sn-glycerol + H(+). It carries out the reaction a 1,2-diacyl-sn-glycero-3-phospho-(1D-myo-inositol) + H2O = 1D-myo-inositol 1-phosphate + a 1,2-diacyl-sn-glycerol + H(+). The production of the second messenger molecules diacylglycerol (DAG) and inositol 1,4,5-trisphosphate (IP3) is mediated by activated phosphatidylinositol-specific phospholipase C enzymes. In neutrophils, participates in a phospholipase C-activating N-formyl peptide-activated GPCR (G protein-coupled receptor) signaling pathway by promoting RASGRP4 activation by DAG, to promote neutrophil functional responses. In Homo sapiens (Human), this protein is 1-phosphatidylinositol 4,5-bisphosphate phosphodiesterase beta-2.